A 280-amino-acid polypeptide reads, in one-letter code: MTKIKFTKMHGNGNDFIVIDEFENPVPEEKKAAFAKKVCHRRFGIGADGVLFLAKPLHTSLHMRIFNEDGSEAEMCGNGIRCFVKYAVDNGHMNPGKDKVETKAGILEVEARIEDGKTLVKVSMGKPLFDPKKIPAAGLNNFINKPLHGYEVTAVNTGVPHAVIFVDDVNAVDLMKVAPEIRYDLKTFPKGINVNFVQREGHNLRVRTYERGVEGETLSCGTGSVASAAVARYLGYTRDETTVYTAGGQLNISFVSDIAYMEGPAETVYEGEIDVDFSAL.

Positions 14 and 67 each coordinate substrate. Residue C76 is the Proton donor of the active site. Substrate is bound by residues 77–78 (GN), N193, and 210–211 (ER). C220 (proton acceptor) is an active-site residue. Residue 221-222 (GT) participates in substrate binding.

This sequence belongs to the diaminopimelate epimerase family. As to quaternary structure, homodimer.

Its subcellular location is the cytoplasm. It catalyses the reaction (2S,6S)-2,6-diaminopimelate = meso-2,6-diaminopimelate. Its pathway is amino-acid biosynthesis; L-lysine biosynthesis via DAP pathway; DL-2,6-diaminopimelate from LL-2,6-diaminopimelate: step 1/1. Catalyzes the stereoinversion of LL-2,6-diaminopimelate (L,L-DAP) to meso-diaminopimelate (meso-DAP), a precursor of L-lysine. The polypeptide is Diaminopimelate epimerase (Methanocella arvoryzae (strain DSM 22066 / NBRC 105507 / MRE50)).